Reading from the N-terminus, the 142-residue chain is Large ribosomal subunit protein uL13 (142 aa).

It belongs to the universal ribosomal protein uL13 family. As to quaternary structure, part of the 50S ribosomal subunit.

In terms of biological role, this protein is one of the early assembly proteins of the 50S ribosomal subunit, although it is not seen to bind rRNA by itself. It is important during the early stages of 50S assembly. The sequence is that of Large ribosomal subunit protein uL13 from Glaesserella parasuis serovar 5 (strain SH0165) (Haemophilus parasuis).